A 119-amino-acid chain; its full sequence is Immunoglobulin heavy variable 2-70D (119 aa).

Residues 1 to 19 form the signal peptide; that stretch reads MDILCSTLLLLTVPSWVLS. Gln-20 carries the pyrrolidone carboxylic acid modification. Residues 20 to 44 form a framework-1 region; that stretch reads QVTLKESGPALVKPTQTLTLTCTFS. The Ig-like domain occupies 20 to 119; sequence QVTLKESGPA…DTATYYCARI (100 aa). The cysteines at positions 41 and 116 are disulfide-linked. A complementarity-determining-1 region spans residues 45 to 54; it reads GFSLSTSGMR. A framework-2 region spans residues 55-71; it reads VSWIRQPPGKALEWLAR. Positions 72–78 are complementarity-determining-2; sequence IDWDDDK. The segment at 79-116 is framework-3; that stretch reads FYSTSLKTRLTISKDTSKNQVVLTMTNMDPVDTATYYC. The segment at 117–119 is complementarity-determining-3; the sequence is ARI.

Immunoglobulins are composed of two identical heavy chains and two identical light chains; disulfide-linked.

The protein resides in the secreted. Its subcellular location is the cell membrane. Its function is as follows. V region of the variable domain of immunoglobulin heavy chains that participates in the antigen recognition. Immunoglobulins, also known as antibodies, are membrane-bound or secreted glycoproteins produced by B lymphocytes. In the recognition phase of humoral immunity, the membrane-bound immunoglobulins serve as receptors which, upon binding of a specific antigen, trigger the clonal expansion and differentiation of B lymphocytes into immunoglobulins-secreting plasma cells. Secreted immunoglobulins mediate the effector phase of humoral immunity, which results in the elimination of bound antigens. The antigen binding site is formed by the variable domain of one heavy chain, together with that of its associated light chain. Thus, each immunoglobulin has two antigen binding sites with remarkable affinity for a particular antigen. The variable domains are assembled by a process called V-(D)-J rearrangement and can then be subjected to somatic hypermutations which, after exposure to antigen and selection, allow affinity maturation for a particular antigen. The sequence is that of Immunoglobulin heavy variable 2-70D from Homo sapiens (Human).